Consider the following 139-residue polypeptide: Phosphoribosyl-AMP cyclohydrolase (139 aa).

Mg(2+) is bound at residue Asp-91. Residue Cys-92 participates in Zn(2+) binding. Residues Asp-93 and Asp-95 each contribute to the Mg(2+) site. Zn(2+) contacts are provided by Cys-110 and Cys-117.

It belongs to the PRA-CH family. Homodimer. Requires Mg(2+) as cofactor. The cofactor is Zn(2+).

The protein localises to the cytoplasm. The enzyme catalyses 1-(5-phospho-beta-D-ribosyl)-5'-AMP + H2O = 1-(5-phospho-beta-D-ribosyl)-5-[(5-phospho-beta-D-ribosylamino)methylideneamino]imidazole-4-carboxamide. It functions in the pathway amino-acid biosynthesis; L-histidine biosynthesis; L-histidine from 5-phospho-alpha-D-ribose 1-diphosphate: step 3/9. Functionally, catalyzes the hydrolysis of the adenine ring of phosphoribosyl-AMP. The sequence is that of Phosphoribosyl-AMP cyclohydrolase from Brucella canis (strain ATCC 23365 / NCTC 10854 / RM-666).